Consider the following 212-residue polypeptide: Peptide methionine sulfoxide reductase MsrA (212 aa).

C52 is a catalytic residue.

It belongs to the MsrA Met sulfoxide reductase family.

It catalyses the reaction L-methionyl-[protein] + [thioredoxin]-disulfide + H2O = L-methionyl-(S)-S-oxide-[protein] + [thioredoxin]-dithiol. The enzyme catalyses [thioredoxin]-disulfide + L-methionine + H2O = L-methionine (S)-S-oxide + [thioredoxin]-dithiol. Has an important function as a repair enzyme for proteins that have been inactivated by oxidation. Catalyzes the reversible oxidation-reduction of methionine sulfoxide in proteins to methionine. This Salmonella arizonae (strain ATCC BAA-731 / CDC346-86 / RSK2980) protein is Peptide methionine sulfoxide reductase MsrA.